A 154-amino-acid polypeptide reads, in one-letter code: Ribosome maturation factor RimP (154 aa).

This sequence belongs to the RimP family.

The protein localises to the cytoplasm. Required for maturation of 30S ribosomal subunits. This Clostridium perfringens (strain SM101 / Type A) protein is Ribosome maturation factor RimP.